The chain runs to 391 residues: Probable sugar efflux transporter (391 aa).

12 consecutive transmembrane segments (helical) span residues 16-36, 51-71, 82-102, 103-123, 138-158, 170-190, 210-230, 247-267, 277-297, 300-320, 338-358, and 361-381; these read VFVF…PVAL, VGLM…PLML, LLFL…AWNF, WVLL…WSIT, QALG…LPLG, TFGV…KLLP, PLLV…FTTY, ITTL…FLFG, FIAF…VFKN, WVIF…TIAL, IFSG…SIVI, and LGLE…LFWL.

This sequence belongs to the major facilitator superfamily. SotB (TC 2.A.1.2) family.

It is found in the cell inner membrane. In terms of biological role, involved in the efflux of sugars. The physiological role may be the reduction of the intracellular concentration of toxic sugars or sugar metabolites. In Helicobacter pylori (strain P12), this protein is Probable sugar efflux transporter.